The chain runs to 574 residues: Ankyrin repeat protein B19 (574 aa).

6 ANK repeats span residues 56–87, 135–164, 167–213, 217–249, 253–285, and 327–356; these read TGYT…DVTM, IKSR…DPNF, DGYT…NLNA, CGNT…NFEI, HGLT…NVGE, and EGKT…DINA. The region spanning 541-574 is the F-box domain; that stretch reads NCLLTLLPSEIIYEILYMLTINDLYNISYPPTKV.

It belongs to the poxvirinae B18 protein family.

This is Ankyrin repeat protein B19 from Vaccinia virus (strain Western Reserve) (VACV).